We begin with the raw amino-acid sequence, 509 residues long: Maturase K (509 aa).

It belongs to the intron maturase 2 family. MatK subfamily.

It localises to the plastid. The protein resides in the chloroplast. In terms of biological role, usually encoded in the trnK tRNA gene intron. Probably assists in splicing its own and other chloroplast group II introns. This Clematis vitalba (Evergreen clematis) protein is Maturase K.